The primary structure comprises 583 residues: Asparagine synthetase, root [glutamine-hydrolyzing] (583 aa).

The For GATase activity role is filled by C2. Residues 2 to 185 (CGILAVLGCS…PGHLYSSKDS (184 aa)) enclose the Glutamine amidotransferase type-2 domain. Residues 50–54 (RLAIV), 75–77 (NGE), and D98 contribute to the L-glutamine site. ATP contacts are provided by residues L231, V267, and 341-342 (SG). One can recognise an Asparagine synthetase domain in the interval 237-516 (DSSLVASITS…PQNSARLTVP (280 aa)).

In terms of tissue distribution, roots.

The enzyme catalyses L-aspartate + L-glutamine + ATP + H2O = L-asparagine + L-glutamate + AMP + diphosphate + H(+). It functions in the pathway amino-acid biosynthesis; L-asparagine biosynthesis; L-asparagine from L-aspartate (L-Gln route): step 1/1. The chain is Asparagine synthetase, root [glutamine-hydrolyzing] (AS2) from Pisum sativum (Garden pea).